The primary structure comprises 113 residues: Prostate and testis expressed protein 2 (113 aa).

The N-terminal stretch at 1 to 26 (MLVLFLLGTVFLLCPYWGELHDPIKA) is a signal peptide. The region spanning 29-110 (IMCYECKKYH…CDHSNYCNLP (82 aa)) is the UPAR/Ly6 domain. 4 disulfide bridges follow: Cys31-Cys57, Cys34-Cys42, Cys49-Cys80, and Cys84-Cys101.

Belongs to the PATE family. In terms of tissue distribution, isoform 1 and isoform 2 are expressed in prostate and testis. Isoform 2 is expressed in male and female brain at equivalent levels, in particular in cerebellum, cerebral cortex, corpus callosum, occipital, parrietal and temporal lobes, and pons, but not in amygdala, cerebral peduncle, hippocampus and thalamus.

Its subcellular location is the secreted. This chain is Prostate and testis expressed protein 2 (PATE2), found in Homo sapiens (Human).